The chain runs to 315 residues: Lipoyl synthase (315 aa).

Residues C62, C67, C73, C88, C92, C95, and S302 each contribute to the [4Fe-4S] cluster site. Residues 73 to 291 (CFGHGTATFM…GELAKKLGFS (219 aa)) enclose the Radical SAM core domain.

It belongs to the radical SAM superfamily. Lipoyl synthase family. The cofactor is [4Fe-4S] cluster.

The protein resides in the cytoplasm. The enzyme catalyses [[Fe-S] cluster scaffold protein carrying a second [4Fe-4S](2+) cluster] + N(6)-octanoyl-L-lysyl-[protein] + 2 oxidized [2Fe-2S]-[ferredoxin] + 2 S-adenosyl-L-methionine + 4 H(+) = [[Fe-S] cluster scaffold protein] + N(6)-[(R)-dihydrolipoyl]-L-lysyl-[protein] + 4 Fe(3+) + 2 hydrogen sulfide + 2 5'-deoxyadenosine + 2 L-methionine + 2 reduced [2Fe-2S]-[ferredoxin]. It functions in the pathway protein modification; protein lipoylation via endogenous pathway; protein N(6)-(lipoyl)lysine from octanoyl-[acyl-carrier-protein]: step 2/2. Its function is as follows. Catalyzes the radical-mediated insertion of two sulfur atoms into the C-6 and C-8 positions of the octanoyl moiety bound to the lipoyl domains of lipoate-dependent enzymes, thereby converting the octanoylated domains into lipoylated derivatives. The protein is Lipoyl synthase of Coxiella burnetii (strain CbuG_Q212) (Coxiella burnetii (strain Q212)).